A 157-amino-acid polypeptide reads, in one-letter code: Histone H2B.3 (157 aa).

A disordered region spans residues 1 to 64 (MAPKKEEKPA…DKKSKKKAKV (64 aa)). Over residues 26–42 (KAVKAPKKKEKKAPAKK) the composition is skewed to basic residues. A Glycyl lysine isopeptide (Lys-Gly) (interchain with G-Cter in ubiquitin) cross-link involves residue Lys-153.

It belongs to the histone H2B family. As to quaternary structure, the nucleosome is a histone octamer containing two molecules each of H2A, H2B, H3 and H4 assembled in one H3-H4 heterotetramer and two H2A-H2B heterodimers. The octamer wraps approximately 147 bp of DNA. Monoubiquitinated to form H2BK143ub1; may give a specific tag for epigenetic transcriptional activation.

It is found in the nucleus. Its subcellular location is the chromosome. Functionally, core component of nucleosome. Nucleosomes wrap and compact DNA into chromatin, limiting DNA accessibility to the cellular machineries which require DNA as a template. Histones thereby play a central role in transcription regulation, DNA repair, DNA replication and chromosomal stability. DNA accessibility is regulated via a complex set of post-translational modifications of histones, also called histone code, and nucleosome remodeling. The chain is Histone H2B.3 from Volvox carteri (Green alga).